The following is a 96-amino-acid chain: Probable quinol oxidase subunit 4 (96 aa).

The next 3 helical transmembrane spans lie at 8–28 (TVGFIASIVLTILAVFVTLYT), 36–56 (ITIIFGFAFIQAAVQLLMFMH), and 68–88 (FKVLFAIIITLITVIGTYWVM).

Belongs to the cytochrome c oxidase bacterial subunit 4 family.

The protein localises to the cell membrane. The catalysed reaction is 2 a quinol + O2 = 2 a quinone + 2 H2O. Its function is as follows. Catalyzes quinol oxidation with the concomitant reduction of oxygen to water. The protein is Probable quinol oxidase subunit 4 (qoxD) of Staphylococcus saprophyticus subsp. saprophyticus (strain ATCC 15305 / DSM 20229 / NCIMB 8711 / NCTC 7292 / S-41).